The following is a 548-amino-acid chain: Adenine deaminase (548 aa).

This sequence belongs to the metallo-dependent hydrolases superfamily. Adenine deaminase family. The cofactor is Mn(2+).

It catalyses the reaction adenine + H2O + H(+) = hypoxanthine + NH4(+). This Borreliella burgdorferi (strain ATCC 35210 / DSM 4680 / CIP 102532 / B31) (Borrelia burgdorferi) protein is Adenine deaminase.